The primary structure comprises 209 residues: MTAKFIVIEGLEGAGKSTAIQQVIDALAAHGIENPESTREPGGTPLAEQMRALIKEGHPDEPLTDMAELLLLYAARIQLVDNIIKPALAEGRWVVGDRHDMSSQAYQGGGRGFDKALMENLRDTVLGDFCPDLTIYMDIDPILGLERARGRGELDRIEKMNVDFFHRARARFLELSENNPKVIIIDAGQSLENVTSDLKQALNHWLEKQ.

Residue Gly10–Ser17 coordinates ATP.

Belongs to the thymidylate kinase family.

It catalyses the reaction dTMP + ATP = dTDP + ADP. Its function is as follows. Phosphorylation of dTMP to form dTDP in both de novo and salvage pathways of dTTP synthesis. The sequence is that of Thymidylate kinase from Photobacterium profundum (strain SS9).